The primary structure comprises 548 residues: Folylpolyglutamate synthase (548 aa).

130–133 contributes to the ATP binding site; sequence GKGS. Mg(2+) is bound by residues Ser-157, Glu-234, and His-262. 2 residues coordinate ATP: Arg-382 and Asp-396.

It belongs to the folylpolyglutamate synthase family. A monovalent cation is required as a cofactor.

It localises to the mitochondrion inner membrane. Its subcellular location is the mitochondrion matrix. The protein localises to the cytoplasm. The catalysed reaction is (6S)-5,6,7,8-tetrahydrofolyl-(gamma-L-Glu)(n) + L-glutamate + ATP = (6S)-5,6,7,8-tetrahydrofolyl-(gamma-L-Glu)(n+1) + ADP + phosphate + H(+). It participates in cofactor biosynthesis; tetrahydrofolylpolyglutamate biosynthesis. Functionally, catalyzes conversion of folates to polyglutamate derivatives allowing concentration of folate compounds in the cell and the intracellular retention of these cofactors, which are important substrates for most of the folate-dependent enzymes that are involved in one-carbon transfer reactions involved in purine, pyrimidine and amino acid synthesis. Required for methionine synthesis and maintenance of intact mitochondrial DNA. Involved in telomere maintenance. In Saccharomyces cerevisiae (strain AWRI1631) (Baker's yeast), this protein is Folylpolyglutamate synthase.